We begin with the raw amino-acid sequence, 756 residues long: Phosphoinositide 3-kinase regulatory subunit 6 (756 aa).

2 disordered regions span residues 570–589 (SKSPKEGSSPRRRGAAEGTG) and 716–738 (CSRTQKSKTSALNSHGQETEKNM). Residues 717-731 (SRTQKSKTSALNSHG) show a composition bias toward polar residues.

As to quaternary structure, heterodimer of a catalytic subunit (PIK3CG) and a regulatory (PIK3R6) subunit. The binding of PIK3R6 to PIK3CG may exclude the binding of PIK3R5 to PIK3CG. Interacts with beta-gamma G protein dimers. Interacts with PDE3B and RAPGEF3; form a signaling complex that regulates phosphatidylinositol 3-kinase gamma in angiogenesis. Highly expressed in heart. In a lower extent, also expressed in brain, spleen, lung, liver, kidney, prostate, thyroid, salivary gland, dendritic cells, macrophages and neutrophils.

The protein resides in the cytoplasm. It localises to the cell membrane. Its function is as follows. Regulatory subunit of the PI3K gamma complex. Acts as an adapter to drive activation of PIK3CG by beta-gamma G protein dimers. The PIK3CG:PIK3R6 heterodimer is much less sensitive to beta-gamma G proteins than PIK3CG:PIK3R5 and its membrane recruitment and beta-gamma G protein dimer-dependent activation requires HRAS bound to PIK3CG. Recruits of the PI3K gamma complex to a PDE3B:RAPGEF3 signaling complex involved in angiogenesis; signaling seems to involve RRAS. In Mus musculus (Mouse), this protein is Phosphoinositide 3-kinase regulatory subunit 6 (Pik3r6).